A 92-amino-acid chain; its full sequence is Probable Fe(2+)-trafficking protein (92 aa).

Belongs to the Fe(2+)-trafficking protein family.

In terms of biological role, could be a mediator in iron transactions between iron acquisition and iron-requiring processes, such as synthesis and/or repair of Fe-S clusters in biosynthetic enzymes. The protein is Probable Fe(2+)-trafficking protein of Shewanella woodyi (strain ATCC 51908 / MS32).